The chain runs to 28 residues: MSLILIFFAFTVLKSSKWICANRSVCPI.

The N-terminal stretch at 1–15 (MSLILIFFAFTVLKS) is a signal peptide. The cysteines at positions 20 and 26 are disulfide-linked.

Monomer in solution. Post-translationally, may be N-glycosylated at Asn-22. Activity with this modification has not be tested. As to expression, highly expressed in the tentacles. Weakly expressed in acrorhagi and mesenteric filaments.

The protein localises to the secreted. It localises to the nematocyst. In terms of biological role, probable toxin expected to be employed in prey capture and/or defense against predators (based on its abundance in tentacles). Has only a weak affinity for lipid membranes. Shows moderate cytotoxic activity against breast cancer cell lines (MCF-7 and MDA-MB-231). The sequence is that of U-actitoxin-Ate1 from Actinia tenebrosa (Australian red waratah sea anemone).